Here is a 646-residue protein sequence, read N- to C-terminus: Beta-galactosidase-1-like protein (646 aa).

Positions 1–23 are cleaved as a signal peptide; sequence MPPDLPSLLLRLVVLLLLSQAEA. The N-linked (GlcNAc...) asparagine glycan is linked to Asn-93. The active-site Proton donor is the Glu-182. Asn-239 is a glycosylation site (N-linked (GlcNAc...) asparagine). The Nucleophile role is filled by Glu-260.

This sequence belongs to the glycosyl hydrolase 35 family.

It is found in the secreted. Its function is as follows. Probable glycosyl hydrolase. The sequence is that of Beta-galactosidase-1-like protein (Glb1l) from Mus musculus (Mouse).